We begin with the raw amino-acid sequence, 365 residues long: uncharacterized protein (365 aa).

Basic and acidic residues-rich tracts occupy residues 1 to 27 (MDNV…EDHS) and 315 to 339 (AKDD…ETPK). Disordered stretches follow at residues 1–31 (MDNV…NSYQ) and 308–365 (KEEK…CLIS). Polar residues predominate over residues 340–353 (KASNTPRRNKSNTQ).

To yeast YGL082w. As to quaternary structure, interacts with sad1.

It localises to the cytoplasm. This is an uncharacterized protein from Schizosaccharomyces pombe (strain 972 / ATCC 24843) (Fission yeast).